The primary structure comprises 609 residues: QWRF motif-containing protein 4 (609 aa).

Disordered regions lie at residues M1–N227 and E271–S369. Composition is skewed to polar residues over residues G11 to T21 and E46 to T57. 2 stretches are compositionally biased toward low complexity: residues P98 to S110 and S129 to V143. Polar residues predominate over residues V151–K180. Low complexity-rich tracts occupy residues E271–E285 and S302–G332. Positions Q407–F410 match the QWRF motif motif. The interval E588–P609 is disordered.

The protein belongs to the QWRF family.

This chain is QWRF motif-containing protein 4 (QWRF4), found in Arabidopsis thaliana (Mouse-ear cress).